The primary structure comprises 129 residues: Ergosterol biosynthetic protein 28 (129 aa).

Transmembrane regions (helical) follow at residues 4 to 24 (LGYW…FGFF), 46 to 66 (TFGV…FNLE), 71 to 91 (YLAT…EYLF), and 96 to 116 (TIAN…WMLL).

This sequence belongs to the ERG28 family.

Its subcellular location is the endoplasmic reticulum membrane. This chain is Ergosterol biosynthetic protein 28, found in Arabidopsis thaliana (Mouse-ear cress).